Here is a 660-residue protein sequence, read N- to C-terminus: Bifunctional polymyxin resistance protein ArnA (660 aa).

A formyltransferase ArnAFT region spans residues 1 to 304; sequence MKAVIFAYHD…TLGLVAGACL (304 aa). The active-site Proton donor; for formyltransferase activity is histidine 104. (6R)-10-formyltetrahydrofolate-binding positions include arginine 114 and 136–140; that span reads VKRAD. The dehydrogenase ArnADH stretch occupies residues 314 to 660; it reads RRIRVLILGV…RSVDIAERAS (347 aa). NAD(+) is bound by residues aspartate 347 and 368–369; that span reads DI. Residues alanine 393, tyrosine 398, and 432 to 433 contribute to the UDP-alpha-D-glucuronate site; that span reads TS. Glutamate 434 (proton acceptor; for decarboxylase activity) is an active-site residue. UDP-alpha-D-glucuronate contacts are provided by residues arginine 460, asparagine 492, 526-535, and tyrosine 613; that span reads KLIDGGQQKR. Arginine 619 acts as the Proton donor; for decarboxylase activity in catalysis.

In the N-terminal section; belongs to the Fmt family. UDP-L-Ara4N formyltransferase subfamily. It in the C-terminal section; belongs to the NAD(P)-dependent epimerase/dehydratase family. UDP-glucuronic acid decarboxylase subfamily. As to quaternary structure, homohexamer, formed by a dimer of trimers.

The enzyme catalyses UDP-alpha-D-glucuronate + NAD(+) = UDP-beta-L-threo-pentopyranos-4-ulose + CO2 + NADH. The catalysed reaction is UDP-4-amino-4-deoxy-beta-L-arabinose + (6R)-10-formyltetrahydrofolate = UDP-4-deoxy-4-formamido-beta-L-arabinose + (6S)-5,6,7,8-tetrahydrofolate + H(+). Its pathway is nucleotide-sugar biosynthesis; UDP-4-deoxy-4-formamido-beta-L-arabinose biosynthesis; UDP-4-deoxy-4-formamido-beta-L-arabinose from UDP-alpha-D-glucuronate: step 1/3. It functions in the pathway nucleotide-sugar biosynthesis; UDP-4-deoxy-4-formamido-beta-L-arabinose biosynthesis; UDP-4-deoxy-4-formamido-beta-L-arabinose from UDP-alpha-D-glucuronate: step 3/3. The protein operates within bacterial outer membrane biogenesis; lipopolysaccharide biosynthesis. Bifunctional enzyme that catalyzes the oxidative decarboxylation of UDP-glucuronic acid (UDP-GlcUA) to UDP-4-keto-arabinose (UDP-Ara4O) and the addition of a formyl group to UDP-4-amino-4-deoxy-L-arabinose (UDP-L-Ara4N) to form UDP-L-4-formamido-arabinose (UDP-L-Ara4FN). The modified arabinose is attached to lipid A and is required for resistance to polymyxin and cationic antimicrobial peptides. The sequence is that of Bifunctional polymyxin resistance protein ArnA from Salmonella paratyphi A (strain ATCC 9150 / SARB42).